We begin with the raw amino-acid sequence, 209 residues long: Small ribosomal subunit protein uS3c (209 aa).

Positions I39–T109 constitute a KH type-2 domain.

The protein belongs to the universal ribosomal protein uS3 family. Part of the 30S ribosomal subunit.

Its subcellular location is the plastid. It localises to the chloroplast. The sequence is that of Small ribosomal subunit protein uS3c (rps3) from Gracilaria tenuistipitata (Red alga).